A 225-amino-acid chain; its full sequence is Small ribosomal subunit protein eS1 (225 aa).

A compositionally biased stretch (acidic residues) spans 206–216; the sequence is PVEEPAAEEVA. A disordered region spans residues 206-225; that stretch reads PVEEPAAEEVAEAPAAETQE.

It belongs to the eukaryotic ribosomal protein eS1 family.

The sequence is that of Small ribosomal subunit protein eS1 from Methanococcus maripaludis (strain C5 / ATCC BAA-1333).